We begin with the raw amino-acid sequence, 640 residues long: MSSKTPLLDTIASPADTRGLSLAELKQLAAEVRAETIDAVSVTGGHLGAGLGVVELTVALHHVFETPKDIVIWDVGHQAYPHKILTGRRDRIRTLRQGGGLSGFTKRAESEYDPFGAAHAATSISAALGFCAARDAKGEDNSVIAVIGDGSLGAGMAYEAMNAATDTTKRLIVILNDNDMSIAPPVGGMSAYLANLVSGGAYRSVRKLGKTVVEKLPTPMREAARKAEEYARGMVTGGTFFEELGFYYIGPIDGHDMDALVSVLKNAKAFGDKPVLVHCVTQKGKGYAPAEGAADKLHAVVKFDVVTGQQQKAAGGPPSYTKVFAQELIKQAEKDDKIVAITAAMPSGTGLDLFGKAFPERTFDVGIAEQHAVTFAAGMAADGMKPFAAIYSTFLQRGYDQVVHDVAIQGLPVRFAMDRAGLVGADGPTHAGSFDIGFMGALPGMVLMAAADEVELARMVATAAEIDDRPSAFRYPRGEGLGLDMPAIAEPLEIGKGRIVREGTSVAIVSFGTRLSESLKAADLLAARGLSATVCDARFAKPLDLDLLLRLAREHEAIITVEEGSMGGFGAFVLQALAQHGALDRGLKIRTLCLPDVFQDQDKPDAMYAQAGLDAEGILRGALSAMGMDNVSAAGAGRRA.

Thiamine diphosphate-binding positions include His-77 and 118 to 120; that span reads AHA. Asp-149 contributes to the Mg(2+) binding site. Thiamine diphosphate is bound by residues 150 to 151, Asn-178, Tyr-287, and Glu-369; that span reads GS. Residue Asn-178 participates in Mg(2+) binding.

It belongs to the transketolase family. DXPS subfamily. Homodimer. The cofactor is Mg(2+). It depends on thiamine diphosphate as a cofactor.

The catalysed reaction is D-glyceraldehyde 3-phosphate + pyruvate + H(+) = 1-deoxy-D-xylulose 5-phosphate + CO2. The protein operates within metabolic intermediate biosynthesis; 1-deoxy-D-xylulose 5-phosphate biosynthesis; 1-deoxy-D-xylulose 5-phosphate from D-glyceraldehyde 3-phosphate and pyruvate: step 1/1. Functionally, catalyzes the acyloin condensation reaction between C atoms 2 and 3 of pyruvate and glyceraldehyde 3-phosphate to yield 1-deoxy-D-xylulose-5-phosphate (DXP). The polypeptide is 1-deoxy-D-xylulose-5-phosphate synthase (Caulobacter vibrioides (strain NA1000 / CB15N) (Caulobacter crescentus)).